The primary structure comprises 203 residues: Glycerol-3-phosphate acyltransferase (203 aa).

5 helical membrane passes run 6–26 (LTLAMILTAYLAGSISSAVLV), 56–76 (AAAMVLLFDMLKGAVPAYVAF), 82–102 (AVSLGVIAIAACLGHIFPIFF), 118–138 (APIGADLSLALIATWVIVVLI), and 141–161 (YSSLAAIVTALLAPAYTWYFD).

This sequence belongs to the PlsY family. In terms of assembly, probably interacts with PlsX.

Its subcellular location is the cell inner membrane. The catalysed reaction is an acyl phosphate + sn-glycerol 3-phosphate = a 1-acyl-sn-glycero-3-phosphate + phosphate. Its pathway is lipid metabolism; phospholipid metabolism. Its function is as follows. Catalyzes the transfer of an acyl group from acyl-phosphate (acyl-PO(4)) to glycerol-3-phosphate (G3P) to form lysophosphatidic acid (LPA). This enzyme utilizes acyl-phosphate as fatty acyl donor, but not acyl-CoA or acyl-ACP. The protein is Glycerol-3-phosphate acyltransferase of Shewanella loihica (strain ATCC BAA-1088 / PV-4).